Reading from the N-terminus, the 211-residue chain is Uracil phosphoribosyltransferase (211 aa).

Residues Arg77, Arg102, and 129–137 (DPMLATGGS) each bind 5-phospho-alpha-D-ribose 1-diphosphate. Residues Ile192 and 197-199 (GDA) contribute to the uracil site. Residue Asp198 participates in 5-phospho-alpha-D-ribose 1-diphosphate binding.

This sequence belongs to the UPRTase family. It depends on Mg(2+) as a cofactor.

It catalyses the reaction UMP + diphosphate = 5-phospho-alpha-D-ribose 1-diphosphate + uracil. The protein operates within pyrimidine metabolism; UMP biosynthesis via salvage pathway; UMP from uracil: step 1/1. Its activity is regulated as follows. Allosterically activated by GTP. Catalyzes the conversion of uracil and 5-phospho-alpha-D-ribose 1-diphosphate (PRPP) to UMP and diphosphate. In Corynebacterium glutamicum (strain R), this protein is Uracil phosphoribosyltransferase.